Reading from the N-terminus, the 558-residue chain is Potassium-transporting ATPase potassium-binding subunit (558 aa).

Transmembrane regions (helical) follow at residues 1–21 (MEIILFLTMMVMITYVFSGYL), 66–86 (FNGFMGFITFVLLIVQQWLFL), 127–147 (MIVMTYLMFTSSASGYAVCIA), 166–186 (IVRFIVRVLLPLSCLISILLM), 245–265 (IWSNFIEMGSMMLLPMSMLFL), 281–301 (ALILFVAMFFIFIAILTLTMW), 327–347 (FGAGLSALFTVITTAFTTGSV), 354–374 (LTPIGGLGPMVLMMLNVVFGG), 377–397 (VGLMNLLIFVLLTVFICSLMV), 416–436 (IVLVFLIHPILILVFSALAFM), 482–502 (ISTGIIMLLSRYIPIILQLMI), and 531–551 (IVFIVLLSGLTFIPVLLLGPI).

Belongs to the KdpA family. In terms of assembly, the system is composed of three essential subunits: KdpA, KdpB and KdpC.

The protein localises to the cell membrane. Functionally, part of the high-affinity ATP-driven potassium transport (or Kdp) system, which catalyzes the hydrolysis of ATP coupled with the electrogenic transport of potassium into the cytoplasm. This subunit binds the extracellular potassium ions and delivers the ions to the membrane domain of KdpB through an intramembrane tunnel. This chain is Potassium-transporting ATPase potassium-binding subunit, found in Staphylococcus aureus (strain USA300).